The sequence spans 488 residues: GTPase Der (488 aa).

2 EngA-type G domains span residues Pro-3 to Met-166 and Ile-200 to Thr-373. Residues Gly-9 to Ser-16, Asp-56 to Ile-60, Asn-118 to Asp-121, Gly-206 to Ser-213, Asp-253 to Val-257, and Asn-318 to Asp-321 each bind GTP. The KH-like domain maps to Arg-374–Asp-458.

The protein belongs to the TRAFAC class TrmE-Era-EngA-EngB-Septin-like GTPase superfamily. EngA (Der) GTPase family. Associates with the 50S ribosomal subunit.

In terms of biological role, GTPase that plays an essential role in the late steps of ribosome biogenesis. This is GTPase Der from Shewanella amazonensis (strain ATCC BAA-1098 / SB2B).